The following is a 521-amino-acid chain: Probable feruloyl esterase B-2 (521 aa).

Residues M1–A19 form the signal peptide. N-linked (GlcNAc...) asparagine glycosylation is found at N13, N53, N85, N98, and N138. 2 cysteine pairs are disulfide-bonded: C28/C75 and C63/C114. 4 cysteine pairs are disulfide-bonded: C187-C440, C257-C274, C283-C291, and C506-C520. S188 functions as the Acyl-ester intermediate in the catalytic mechanism. N-linked (GlcNAc...) asparagine glycosylation occurs at N235. Positions 258, 261, 263, 265, and 267 each coordinate Ca(2+). Catalysis depends on D399, which acts as the Charge relay system. Residue N419 is glycosylated (N-linked (GlcNAc...) asparagine). Residue H439 is the Charge relay system of the active site.

Belongs to the tannase family.

It localises to the secreted. The enzyme catalyses feruloyl-polysaccharide + H2O = ferulate + polysaccharide.. Its function is as follows. Involved in degradation of plant cell walls. Hydrolyzes the feruloyl-arabinose ester bond in arabinoxylans as well as the feruloyl-galactose and feruloyl-arabinose ester bonds in pectin. The chain is Probable feruloyl esterase B-2 (faeB-2) from Aspergillus flavus (strain ATCC 200026 / FGSC A1120 / IAM 13836 / NRRL 3357 / JCM 12722 / SRRC 167).